A 253-amino-acid chain; its full sequence is Major prion protein (253 aa).

The N-terminal stretch at 1–22 is a signal peptide; that stretch reads MANLGCWMLVLFVATWSDLGLC. The segment at 23-230 is interaction with GRB2, ERI3 and SYN1; sequence KKRPKPGGWN…ESQAYYQRGS (208 aa). Residues 26–108 are disordered; that stretch reads PKPGGWNTGG…WNKPSKPKTN (83 aa). 5 consecutive repeat copies span residues 51-59, 60-67, 68-75, 76-83, and 84-91. The tract at residues 51 to 91 is 5 X 8 AA tandem repeats of P-H-G-G-G-W-G-Q; it reads PQGGGGWGQPHGGGWGQPHGGGWGQPHGGGWGQPHGGGWGQ. The segment covering 52-95 has biased composition (gly residues); it reads QGGGGWGQPHGGGWGQPHGGGWGQPHGGGWGQPHGGGWGQGGGT. The Cu(2+) site is built by H61, G62, G63, H69, G70, G71, H77, G78, G79, H85, G86, and G87. C179 and C214 are disulfide-bonded. N181 and N197 each carry an N-linked (GlcNAc...) asparagine glycan. Residue S230 is the site of GPI-anchor amidated serine attachment. The propeptide at 231–253 is removed in mature form; the sequence is SMVLFSSPPVILLISFLIFLIVG.

It belongs to the prion family. In terms of assembly, monomer and homodimer. Has a tendency to aggregate into amyloid fibrils containing a cross-beta spine, formed by a steric zipper of superposed beta-strands. Soluble oligomers may represent an intermediate stage on the path to fibril formation. Copper binding may promote oligomerization. Interacts with GRB2, APP, ERI3/PRNPIP and SYN1. Mislocalized cytosolically exposed PrP interacts with MGRN1; this interaction alters MGRN1 subcellular location and causes lysosomal enlargement. Interacts with KIAA1191.

It localises to the cell membrane. The protein localises to the golgi apparatus. Functionally, its primary physiological function is unclear. Has cytoprotective activity against internal or environmental stresses. May play a role in neuronal development and synaptic plasticity. May be required for neuronal myelin sheath maintenance. May play a role in iron uptake and iron homeostasis. Soluble oligomers are toxic to cultured neuroblastoma cells and induce apoptosis (in vitro). Association with GPC1 (via its heparan sulfate chains) targets PRNP to lipid rafts. Also provides Cu(2+) or Zn(2+) for the ascorbate-mediated GPC1 deaminase degradation of its heparan sulfate side chains. This Hylobates lar (Lar gibbon) protein is Major prion protein (PRNP).